The chain runs to 425 residues: Fe(2+) transport protein 3, chloroplastic (425 aa).

The helical transmembrane segment at 65-85 threads the bilayer; the sequence is FVAIASILLAGAAGVTIPLIG. The Cytoplasmic portion of the chain corresponds to 86–97; the sequence is RNRRFLQTDGNL. Residues 98–118 traverse the membrane as a helical segment; sequence FVTAKAFAAGVILATGFVHML. Topologically, residues 119-137 are lumenal; the sequence is AGGTEALKNPCLPDFPWSK. Residues 138–158 traverse the membrane as a helical segment; it reads FPFPGFFAMIAALITLFVDFM. At 159 to 269 the chain is on the cytoplasmic side; that stretch reads GTQYYERKQE…GLDAVNGARH (111 aa). The chain crosses the membrane as a helical span at residues 270–290; the sequence is IVVSQVLELGIVSHSIIIGLS. The Lumenal portion of the chain corresponds to 291–301; it reads LGVSQSPCTIR. The chain crosses the membrane as a helical span at residues 302–322; it reads PLIAALSFHQFFEGFALGGCI. At 323–333 the chain is on the cytoplasmic side; it reads SQAQFRNKSAT. A helical transmembrane segment spans residues 334–354; that stretch reads IMACFFALTTPIGIGIGTAVA. The Lumenal portion of the chain corresponds to 355 to 369; the sequence is SSFNSHSVGALVTEG. A helical transmembrane segment spans residues 370 to 390; it reads ILDSLSAGILVYMALVDLIAA. The Cytoplasmic segment spans residues 391–404; it reads DFLSTKMRCNFRLQ. The chain crosses the membrane as a helical span at residues 405–425; that stretch reads IVSYVMLFLGAGLMSSLAIWA.

The protein belongs to the ZIP transporter (TC 2.A.5) family.

It localises to the plastid. Its subcellular location is the chloroplast thylakoid membrane. May play a role in the transport of iron in the plastids. The protein is Fe(2+) transport protein 3, chloroplastic (IRT3) of Arabidopsis thaliana (Mouse-ear cress).